We begin with the raw amino-acid sequence, 460 residues long: tRNA modification GTPase MnmE (460 aa).

(6S)-5-formyl-5,6,7,8-tetrahydrofolate is bound by residues arginine 29, glutamate 89, and arginine 128. The TrmE-type G domain occupies 224–382 (GVPTVIIGKP…LKQNLLEIIQ (159 aa)). A K(+)-binding site is contributed by asparagine 234. GTP is bound by residues 234-239 (NAGKST), 253-259 (SEIAGTT), and 278-281 (DTAG). Serine 238 provides a ligand contact to Mg(2+). Positions 253, 255, and 258 each coordinate K(+). Threonine 259 contacts Mg(2+). Lysine 460 lines the (6S)-5-formyl-5,6,7,8-tetrahydrofolate pocket.

The protein belongs to the TRAFAC class TrmE-Era-EngA-EngB-Septin-like GTPase superfamily. TrmE GTPase family. Homodimer. Heterotetramer of two MnmE and two MnmG subunits. K(+) is required as a cofactor.

Its subcellular location is the cytoplasm. Functionally, exhibits a very high intrinsic GTPase hydrolysis rate. Involved in the addition of a carboxymethylaminomethyl (cmnm) group at the wobble position (U34) of certain tRNAs, forming tRNA-cmnm(5)s(2)U34. The protein is tRNA modification GTPase MnmE of Cytophaga hutchinsonii (strain ATCC 33406 / DSM 1761 / CIP 103989 / NBRC 15051 / NCIMB 9469 / D465).